Reading from the N-terminus, the 339-residue chain is Small ribosomal subunit biogenesis GTPase RsgA (339 aa).

In terms of domain architecture, CP-type G spans Met111 to Phe271. GTP contacts are provided by residues Asn159–Asp162 and Gly213–Ser221. Positions 295, 300, 302, and 308 each coordinate Zn(2+).

The protein belongs to the TRAFAC class YlqF/YawG GTPase family. RsgA subfamily. Monomer. Associates with 30S ribosomal subunit, binds 16S rRNA. Zn(2+) serves as cofactor.

Its subcellular location is the cytoplasm. One of several proteins that assist in the late maturation steps of the functional core of the 30S ribosomal subunit. Helps release RbfA from mature subunits. May play a role in the assembly of ribosomal proteins into the subunit. Circularly permuted GTPase that catalyzes slow GTP hydrolysis, GTPase activity is stimulated by the 30S ribosomal subunit. The chain is Small ribosomal subunit biogenesis GTPase RsgA from Pseudomonas aeruginosa (strain LESB58).